Consider the following 43-residue polypeptide: Thaumatin-like protein 1 (43 aa).

Belongs to the thaumatin family.

In Glebionis coronaria (Crown daisy), this protein is Thaumatin-like protein 1.